Reading from the N-terminus, the 516-residue chain is Cyclic AMP response element-binding protein A (516 aa).

Ser75, Ser79, and Ser82 each carry phosphoserine. 3 disordered regions span residues 213–237 (KDEPMSPDSSCPASPTSQASSSQHQ), 294–338 (KSEK…HLFA), and 353–408 (PAGG…KGST). Over residues 221-237 (SSCPASPTSQASSSQHQ) the composition is skewed to low complexity. Over residues 361 to 392 (RVSRTAASITRSSSGSASASGSSTSSTVTTTR) the composition is skewed to low complexity. The bZIP domain occupies 441-504 (SLKKIRRKIK…ANLLSQLHKL (64 aa)). Residues 443 to 463 (KKIRRKIKNKISAQESRRKKK) are basic motif. The interval 469 to 476 (LERRVEIL) is leucine-zipper.

It belongs to the bZIP family. In terms of assembly, may bind DNA as heterodimers with other bZIP proteins. As to expression, in all cell types examined, including developing salivary gland in embryos and in adults, brain and optic lobe cell bodies, salivary gland, midgut epithelial cells of the cardia, female ovarian columnar follicle cells and male seminal vesicle, ejaculatory duct, and ejaculatory bulb.

Its subcellular location is the nucleus. Functionally, transcriptional activator. Binds to fat body-specific enhancers of alcohol dehydrogenase (ADH) and yolk protein genes. BBF-2 may play a role in fat body gene expression. It binds the consensus sequence 5'-T[AC]NACGTAN[TG]C-3'. The polypeptide is Cyclic AMP response element-binding protein A (CrebA) (Drosophila melanogaster (Fruit fly)).